A 216-amino-acid polypeptide reads, in one-letter code: MRVILLGPPGAGKGTQAKLISEKFSIPHISTGDIFRANIKEKTPLGIEAKRYMDNGQLVPDEVTIGIVKDRLTKDDCDNGFLLDGFPRTVAQAEALDEFLKGINKELDVALLIKVPEEFILERMTGRRVCTSCGASYHIRFNPPKIEGKCDICDNELIQRKDDTEATVKERLEVYSKQTYPLINYYKDNGIISEVNGTESIDEVFGNISNILGRDK.

Residue 10–15 (GAGKGT) participates in ATP binding. An NMP region spans residues 30-59 (STGDIFRANIKEKTPLGIEAKRYMDNGQLV). Residues Thr31, Arg36, 57 to 59 (QLV), 85 to 88 (GFPR), and Gln92 each bind AMP. The segment at 126-163 (GRRVCTSCGASYHIRFNPPKIEGKCDICDNELIQRKDD) is LID. Arg127 provides a ligand contact to ATP. Zn(2+)-binding residues include Cys130 and Cys133. 136 to 137 (SY) is an ATP binding site. Zn(2+)-binding residues include Cys150 and Cys153. 2 residues coordinate AMP: Arg160 and Arg171. ATP is bound at residue Glu199.

The protein belongs to the adenylate kinase family. As to quaternary structure, monomer.

The protein resides in the cytoplasm. The enzyme catalyses AMP + ATP = 2 ADP. The protein operates within purine metabolism; AMP biosynthesis via salvage pathway; AMP from ADP: step 1/1. Functionally, catalyzes the reversible transfer of the terminal phosphate group between ATP and AMP. Plays an important role in cellular energy homeostasis and in adenine nucleotide metabolism. The polypeptide is Adenylate kinase (Clostridium botulinum (strain Loch Maree / Type A3)).